Reading from the N-terminus, the 686-residue chain is MIPGKYRSVSGRAANNVNCGLHLVIQTSSLPEKNKVEFKLNKDTSSFPGRLLQHDLERNYSSRQGDHINLVSSSLSSFPILQRSSEEKILYSDRLSLERQKLTVCPIINGEDHLRLLNFQHNFITRIQNISNLQKLISLDLYDNQIEEISGLSTLRCLRVLLLGKNRIKKISNLENLKSLDVLDLHGNQITKIENINHLCELRVLNLARNFLSHVDNLNGLDSLTELNLRHNQITFVRDVDNLPCLQHLFLSFNNISSFDSVSCLADSSSLSDITFDGNPIAQESWYKHTVLQNMMQLRQLDMKRITEEERRMASVLAKKEEEKKRESHKQSLLKEKKRLTINNVARQWDLQQQRVANIATNEDRKDSDSPQDPCQIDGSTLSAFPEETGPLDSGLNNALQGLSVIDTYLVEVDGDTLSLYGSGALESLDRNWSVQTAGMITTVSFTFIEFDEIVQVLPKLKIKFPNSLHLKFKETNLVMLQQFNALAQLRRIDQLTIDPQGNPVVNFTLWKYYVLFRLSHFSMQKINGTEVTQNDMIMAERLFGILAHVASSELPQYRLISILGDARKKQFRYLLESKGKKPGIINEENNDSKRLVGENTNRATLNYTTRDFYNEKLEEIKEKKKFCKTYIEDLVKEATEINMKNEALQKLWPQMFIELVRDAVIEIRNKNSYMKLCLQQITDQK.

LRR repeat units lie at residues 113–134 (HLRL…SNLQ), 135–156 (KLIS…STLR), 157–178 (CLRV…ENLK), 179–200 (SLDV…NHLC), 201–222 (ELRV…NGLD), 223–244 (SLTE…DNLP), and 245–266 (CLQH…SCLA). Positions 279-317 (NPIAQESWYKHTVLQNMMQLRQLDMKRITEEERRMASVL) constitute an LRRCT domain. Positions 303–341 (MKRITEEERRMASVLAKKEEEKKRESHKQSLLKEKKRLT) form a coiled coil. The segment at 360–388 (ATNEDRKDSDSPQDPCQIDGSTLSAFPEE) is disordered.

As to quaternary structure, part of the neuronal tubulin polyglutamylase complex which contains TPGS1, TPGS2, TTLL1, LRRC49 and NICN1. Interacts with PCM1; TTLL1, TPGS1, TPGS2 and LRRC49.

The protein localises to the cytoplasm. It localises to the cytoskeleton. The protein resides in the microtubule organizing center. Its subcellular location is the centrosome. It is found in the centriolar satellite. Functionally, subunit of the tubulin polyglutamylase complex (TPGC). The complex mediates cilia and flagella polyglutamylation which is essential for their biogenesis and motility. The polypeptide is Leucine-rich repeat-containing protein 49 (Homo sapiens (Human)).